The primary structure comprises 433 residues: ATP-dependent protease ATPase subunit HslU (433 aa).

Residues valine 18, 60–65 (GVGKTE), aspartate 246, glutamate 311, and arginine 383 contribute to the ATP site.

Belongs to the ClpX chaperone family. HslU subfamily. In terms of assembly, a double ring-shaped homohexamer of HslV is capped on each side by a ring-shaped HslU homohexamer. The assembly of the HslU/HslV complex is dependent on binding of ATP.

The protein resides in the cytoplasm. Functionally, ATPase subunit of a proteasome-like degradation complex; this subunit has chaperone activity. The binding of ATP and its subsequent hydrolysis by HslU are essential for unfolding of protein substrates subsequently hydrolyzed by HslV. HslU recognizes the N-terminal part of its protein substrates and unfolds these before they are guided to HslV for hydrolysis. The chain is ATP-dependent protease ATPase subunit HslU from Rhodopseudomonas palustris (strain TIE-1).